The following is a 177-amino-acid chain: Large ribosomal subunit protein uL6 (177 aa).

It belongs to the universal ribosomal protein uL6 family. In terms of assembly, part of the 50S ribosomal subunit.

In terms of biological role, this protein binds to the 23S rRNA, and is important in its secondary structure. It is located near the subunit interface in the base of the L7/L12 stalk, and near the tRNA binding site of the peptidyltransferase center. The polypeptide is Large ribosomal subunit protein uL6 (Edwardsiella ictaluri (strain 93-146)).